Reading from the N-terminus, the 229-residue chain is Cytidylate kinase (229 aa).

12–20 provides a ligand contact to ATP; the sequence is GPSGSGKGT.

It belongs to the cytidylate kinase family. Type 1 subfamily.

It is found in the cytoplasm. The enzyme catalyses CMP + ATP = CDP + ADP. It catalyses the reaction dCMP + ATP = dCDP + ADP. This is Cytidylate kinase from Pseudomonas fluorescens (strain ATCC BAA-477 / NRRL B-23932 / Pf-5).